The chain runs to 312 residues: Small ribosomal subunit protein RACK1 (312 aa).

WD repeat units follow at residues 9–42 (GHRG…ISWK), 63–93 (GHTG…RMWD), 105–135 (KHTK…RVWN), 148–180 (GHED…KVWN), 192–222 (GHSN…LLWD), 233–262 (NVES…SVYD), and 279–307 (PSEC…RVWS).

This sequence belongs to the WD repeat G protein beta family. Ribosomal protein RACK1 subfamily.

The protein is Small ribosomal subunit protein RACK1 of Leishmania major.